A 670-amino-acid polypeptide reads, in one-letter code: Carnitine O-acetyltransferase, mitochondrial (670 aa).

The active-site Proton acceptor is the His-378. Residues Lys-461 and 465 to 472 (KRHGMSPD) contribute to the CoA site. Tyr-494 contributes to the (R)-carnitine binding site. Ser-498 serves as a coordination point for CoA. Residue Thr-507 coordinates (R)-carnitine. Gln-597 is a binding site for CoA. Positions 668 to 670 (AKL) match the Microbody targeting signal motif.

Belongs to the carnitine/choline acetyltransferase family.

It localises to the mitochondrion inner membrane. The protein resides in the peroxisome. The enzyme catalyses (R)-carnitine + acetyl-CoA = O-acetyl-(R)-carnitine + CoA. Carnitine acetylase is specific for short chain fatty acids. Carnitine acetylase seems to affect the flux through the pyruvate dehydrogenase complex. It may be involved as well in the transport of acetyl-CoA into mitochondria. This is Carnitine O-acetyltransferase, mitochondrial (CAT2) from Saccharomyces cerevisiae (strain ATCC 204508 / S288c) (Baker's yeast).